The chain runs to 288 residues: MRCFVYVLVCVVASVSYSRAQLPGAGGPGVFPGGVPTIGPVIPDPTRTETCAKFWVQEGDSCYLFDSGAFLRQVAASRPVVVNNQDGLFQAAANMYCGQMHPNATLVTVNSLAENNFLYEWAVRMMVEPEPVWIGLHVGPAGLWQWYSGEPVTYTNWEGMVAPRAELGLGAMIFDADIIAQMFNNQVEITPQWVPEHGRNDRHSLICEYHPSGMTAAATNAPTTPPMATAPPMAATTRSPVMFQNNPGNLVNRLTGGRFGGSLLHEIPRRQRMRPSNYRKNPYFGIQP.

Positions 1-20 (MRCFVYVLVCVVASVSYSRA) are cleaved as a signal peptide. The C-type lectin domain maps to 93 to 163 (ANMYCGQMHP…YTNWEGMVAP (71 aa)). Asn103 carries an N-linked (GlcNAc...) asparagine glycan.

As to expression, spines and tube feet.

In terms of biological role, matrix protein of the sea urchin embryo spicule. The function of the matrix proteins is to direct crystal growth in certain orientations and inhibit growth in others. The chain is 30 kDa spicule matrix protein (SM30) from Hemicentrotus pulcherrimus (Sea urchin).